A 309-amino-acid polypeptide reads, in one-letter code: Epidermal retinol dehydrogenase 2 (309 aa).

Residues 11 to 31 traverse the membrane as a helical segment; the sequence is LLVFLGKSLLSVLEALLFHVI. 44–68 lines the NADP(+) pocket; sequence LITGAGSGLGRLLALQFARLGAVLV. Position 177 (Ser-177) interacts with substrate. Tyr-190 (proton acceptor) is an active-site residue. The chain crosses the membrane as a helical span at residues 270–290; sequence FLYFIVFLKSILPIKTGILIA.

Belongs to the short-chain dehydrogenases/reductases (SDR) family.

The protein resides in the endoplasmic reticulum membrane. It carries out the reaction all-trans-retinol--[retinol-binding protein] + NAD(+) = all-trans-retinal--[retinol-binding protein] + NADH + H(+). It functions in the pathway cofactor metabolism; retinol metabolism. Functionally, oxidoreductase with strong preference for NAD. Active in both the oxidative and reductive directions. Oxidizes all-trans-retinol in all-trans-retinaldehyde. No activity was detected with 11-cis-retinol or 11-cis-retinaldehyde as substrates with either NAD(+)/NADH or NADP(+)/NADPH. This Mus musculus (Mouse) protein is Epidermal retinol dehydrogenase 2.